The primary structure comprises 123 residues: Proteasome assembly chaperone 4 (123 aa).

Belongs to the PSMG4 family. Interacts with PSMG3. Associates with alpha subunits of the 20S proteasome.

In terms of biological role, chaperone protein which promotes assembly of the 20S proteasome. This is Proteasome assembly chaperone 4 (Psmg4) from Mus musculus (Mouse).